We begin with the raw amino-acid sequence, 210 residues long: Coatomer subunit zeta-2 (210 aa).

A compositionally biased stretch (basic and acidic residues) spans 1 to 12 (MQRPEAWPRPHP). Residues 1–34 (MQRPEAWPRPHPGEGAAAAQAGGPAPPARAGEPS) are disordered. Positions 13 to 34 (GEGAAAAQAGGPAPPARAGEPS) are enriched in low complexity.

Belongs to the adaptor complexes small subunit family. Oligomeric complex.

The protein resides in the cytoplasm. It localises to the endoplasmic reticulum-Golgi intermediate compartment membrane. It is found in the golgi apparatus membrane. Its subcellular location is the cytoplasmic vesicle. The protein localises to the COPI-coated vesicle membrane. Its function is as follows. The coatomer is a cytosolic protein complex that binds to dilysine motifs and reversibly associates with Golgi non-clathrin-coated vesicles, which further mediate biosynthetic protein transport from the ER, via the Golgi up to the trans Golgi network. Coatomer complex is required for budding from Golgi membranes, and is essential for the retrograde Golgi-to-ER transport of dilysine-tagged proteins. The zeta subunit may be involved in regulating the coat assembly and, hence, the rate of biosynthetic protein transport due to its association-dissociation properties with the coatomer complex. The polypeptide is Coatomer subunit zeta-2 (COPZ2) (Homo sapiens (Human)).